The primary structure comprises 289 residues: Serine/threonine-protein phosphatase Pgam5, mitochondrial (289 aa).

It belongs to the phosphoglycerate mutase family. BPG-dependent PGAM subfamily. In terms of assembly, interacts with Pk92B/ASK1.

It is found in the mitochondrion outer membrane. It catalyses the reaction O-phospho-L-seryl-[protein] + H2O = L-seryl-[protein] + phosphate. The enzyme catalyses O-phospho-L-threonyl-[protein] + H2O = L-threonyl-[protein] + phosphate. Functionally, displays phosphatase activity for serine/threonine residues, and dephosphorylates and activates Pk92B kinase. Has apparently no phosphoglycerate mutase activity. This chain is Serine/threonine-protein phosphatase Pgam5, mitochondrial, found in Drosophila grimshawi (Hawaiian fruit fly).